Here is a 502-residue protein sequence, read N- to C-terminus: UPF0371 protein CLL_A2797 (502 aa).

Belongs to the UPF0371 family.

The polypeptide is UPF0371 protein CLL_A2797 (Clostridium botulinum (strain Eklund 17B / Type B)).